Reading from the N-terminus, the 251-residue chain is CDP-diacylglycerol pyrophosphatase (251 aa).

The chain crosses the membrane as a helical span at residues 4-24 (AGLLFLVMIVIAVVASGIGYW).

The protein belongs to the Cdh family.

The protein resides in the cell inner membrane. It catalyses the reaction a CDP-1,2-diacyl-sn-glycerol + H2O = a 1,2-diacyl-sn-glycero-3-phosphate + CMP + 2 H(+). Its pathway is phospholipid metabolism; CDP-diacylglycerol degradation; phosphatidate from CDP-diacylglycerol: step 1/1. In Escherichia coli O8 (strain IAI1), this protein is CDP-diacylglycerol pyrophosphatase.